Consider the following 571-residue polypeptide: Urease subunit alpha (571 aa).

Residues 133–571 form the Urease domain; that stretch reads GGIDTHVHFI…LPLAQRYFLF (439 aa). Ni(2+) contacts are provided by His-138, His-140, and Lys-221. An N6-carboxylysine modification is found at Lys-221. His-223 contributes to the substrate binding site. 2 residues coordinate Ni(2+): His-250 and His-276. His-324 serves as the catalytic Proton donor. Position 364 (Asp-364) interacts with Ni(2+).

Belongs to the metallo-dependent hydrolases superfamily. Urease alpha subunit family. In terms of assembly, heterotrimer of UreA (gamma), UreB (beta) and UreC (alpha) subunits. Three heterotrimers associate to form the active enzyme. It depends on Ni cation as a cofactor. In terms of processing, carboxylation allows a single lysine to coordinate two nickel ions.

The protein resides in the cytoplasm. It carries out the reaction urea + 2 H2O + H(+) = hydrogencarbonate + 2 NH4(+). The protein operates within nitrogen metabolism; urea degradation; CO(2) and NH(3) from urea (urease route): step 1/1. In Staphylococcus carnosus (strain TM300), this protein is Urease subunit alpha.